The sequence spans 671 residues: Transcription factor xilB (671 aa).

The zn(2)-C6 fungal-type DNA-binding region spans 11–46 (CHSCYTRKQKASESDSICDRQYPCNHCTRRRRPEEC). The segment at 48–90 (YGPPPVKVPSCPPVPADQSETQPRPVESARPTRETPVDDSEAH) is disordered. A compositionally biased stretch (pro residues) spans 49–62 (GPPPVKVPSCPPVP). Residues 77 to 90 (RPTRETPVDDSEAH) are compositionally biased toward basic and acidic residues. Residues 148-593 (PERQIIDFLV…ATLLFARSVQ (446 aa)) form a fungal transcription factor domain region. A disordered region spans residues 629-650 (WPSLEAGDPYSMPDNFPSMAQD).

It localises to the nucleus. Its function is as follows. Transcription factor; part of the gene cluster that mediates the biosynthesis of the 6-methyl-2-pyrone derivative xylariolide D. May play a role in the regulation of the expression of the highly reducing polyketide synthase xilA and the cytochroe P450 monooxygenase xilC. The polypeptide is Transcription factor xilB (Penicillium rubens (strain ATCC 28089 / DSM 1075 / NRRL 1951 / Wisconsin 54-1255) (Penicillium chrysogenum)).